A 457-amino-acid chain; its full sequence is Multidrug resistance protein MdtK (457 aa).

Transmembrane regions (helical) follow at residues 11 to 31 (LLAL…MGFV), 53 to 73 (IWLP…PVIA), 93 to 113 (WLAG…GYII), 127 to 147 (AVGY…FQVA), 160 to 180 (GMVM…IFIY), 189 to 209 (GGVG…LAMV), 243 to 263 (LPIA…ALLV), 276 to 296 (IALN…AAVT), 314 to 334 (AART…IFTV), 350 to 370 (VVTL…SDSI), 387 to 407 (IFYI…YILA), and 418 to 438 (PAGF…MMML).

This sequence belongs to the multi antimicrobial extrusion (MATE) (TC 2.A.66.1) family. MdtK subfamily.

The protein resides in the cell inner membrane. Multidrug efflux pump that functions probably as a Na(+)/drug antiporter. This Escherichia coli (strain SE11) protein is Multidrug resistance protein MdtK.